The following is a 280-amino-acid chain: ATP synthase gamma chain (280 aa).

It belongs to the ATPase gamma chain family. F-type ATPases have 2 components, CF(1) - the catalytic core - and CF(0) - the membrane proton channel. CF(1) has five subunits: alpha(3), beta(3), gamma(1), delta(1), epsilon(1). CF(0) has three main subunits: a, b and c.

The protein resides in the cell membrane. In terms of biological role, produces ATP from ADP in the presence of a proton gradient across the membrane. The gamma chain is believed to be important in regulating ATPase activity and the flow of protons through the CF(0) complex. This Mycoplasma capricolum subsp. capricolum (strain California kid / ATCC 27343 / NCTC 10154) protein is ATP synthase gamma chain.